Here is a 310-residue protein sequence, read N- to C-terminus: Malate dehydrogenase (310 aa).

Residues 7-13 and Asp-34 each bind NAD(+); that span reads GAAGGIG. The substrate site is built by Arg-81 and Arg-87. NAD(+) is bound by residues Asn-94 and 117–119; that span reads ITN. The substrate site is built by Asn-119 and Arg-153. His-177 (proton acceptor) is an active-site residue. Met-227 is a binding site for NAD(+).

The protein belongs to the LDH/MDH superfamily. MDH type 1 family. In terms of assembly, homodimer.

It catalyses the reaction (S)-malate + NAD(+) = oxaloacetate + NADH + H(+). Functionally, catalyzes the reversible oxidation of malate to oxaloacetate. The polypeptide is Malate dehydrogenase (Vibrio vulnificus (strain CMCP6)).